Consider the following 252-residue polypeptide: Large ribosomal subunit protein uL30 (252 aa).

This sequence belongs to the universal ribosomal protein uL30 family.

Functionally, binds to G-rich structures in 28S rRNA and in mRNAs. Plays a regulatory role in the translation apparatus; inhibits cell-free translation of mRNAs. The chain is Large ribosomal subunit protein uL30 (RpL7) from Drosophila melanogaster (Fruit fly).